Reading from the N-terminus, the 269-residue chain is Myelin protein zero-like protein 1 (269 aa).

Residues 1–35 (MAASAGAGAVIAAPDSRRWLWSVLAAALGLLTAGV) form the signal peptide. One can recognise an Ig-like V-type domain in the interval 36-146 (SALEVYTPKE…VKNPPDIVVQ (111 aa)). Residues 36–162 (SALEVYTPKE…YVVEKENLPV (127 aa)) lie on the Extracellular side of the membrane. N50 and N130 each carry an N-linked (GlcNAc...) asparagine glycan. Cysteines 58 and 135 form a disulfide. Residues 163–183 (FPVWVVVGIVTAVVLGLTLLI) form a helical membrane-spanning segment. Residues 184–269 (SMILAVLYRR…SVVYADIRKN (86 aa)) lie on the Cytoplasmic side of the membrane. Residues 199-238 (DYTGCSTSESLSPVKQAPRKSPSDTEGLVKSLPSGSHQGP) form a disordered region. A compositionally biased stretch (polar residues) spans 202 to 211 (GCSTSESLSP). 6 positions are modified to phosphoserine: S204, S206, S208, S210, S219, and S221. An ITIM motif 1 motif is present at residues 239–244 (VIYAQL). Y241 bears the Phosphotyrosine mark. S260 is modified (phosphoserine). An ITIM motif 2 motif is present at residues 261 to 266 (VVYADI). Y263 is subject to Phosphotyrosine.

Belongs to the myelin P0 protein family. Interacts with phosphorylated PTPN11/SHP-2. Phosphorylated on tyrosine residues upon stimulation with pervanadate and concanavalin-A (ConA). Phosphorylation at Tyr-241 and Tyr-263 is required for interaction with PTPN11/SHP-2. Dephosphorylated by PTPN11/SHP-2 (in vitro). Post-translationally, N-glycosylated. N-glycosylation is required for concanavalin A binding. In terms of tissue distribution, widely expressed with highest levels in heart, placenta, kidney and pancreas. Isoform 3 is relatively abundant in hematopoietic tissues and fetal liver. Isoform 1 and isoform 3 are expressed in CD14- PB monocytes and pre-B cell progenitors. Isoform 3 appears to be the major isoform in CD34- promyelocytic and promonocytic cells. During differentiation in monocytic cells, the expression level of isoform 3 decreases and that of isoform 1 increases. Isoform 1 is prominent in stromal cells and, to a lesser extent, in umbilical vein endothelial cells and erythroid progenitors. Isoform 2 is expressed in a erythroid progenitor cell line.

It is found in the membrane. Functionally, cell surface receptor, which is involved in signal transduction processes. Recruits PTPN11/SHP-2 to the cell membrane and is a putative substrate of PTPN11/SHP-2. Is a major receptor for concanavalin-A (ConA) and is involved in cellular signaling induced by ConA, which probably includes Src family tyrosine-protein kinases. Isoform 3 seems to have a dominant negative role; it blocks tyrosine phosphorylation of MPZL1 induced by ConA. Isoform 1, but not isoform 2 and isoform 3, may be involved in regulation of integrin-mediated cell motility. This Homo sapiens (Human) protein is Myelin protein zero-like protein 1 (MPZL1).